The following is a 159-amino-acid chain: Ribosomal RNA large subunit methyltransferase H (159 aa).

The S-adenosyl-L-methionine site is built by L76 and G108.

Belongs to the RNA methyltransferase RlmH family. Homodimer.

It is found in the cytoplasm. It carries out the reaction pseudouridine(1915) in 23S rRNA + S-adenosyl-L-methionine = N(3)-methylpseudouridine(1915) in 23S rRNA + S-adenosyl-L-homocysteine + H(+). In terms of biological role, specifically methylates the pseudouridine at position 1915 (m3Psi1915) in 23S rRNA. The polypeptide is Ribosomal RNA large subunit methyltransferase H (Limosilactobacillus fermentum (strain NBRC 3956 / LMG 18251) (Lactobacillus fermentum)).